We begin with the raw amino-acid sequence, 570 residues long: MACMAPRGPAAIPHPSSERAGLRRPARCAMAKAVNPRKKALPAPLSIRLYAPGMTPLLRAGAGGLAASLRAILGSASPAAPWPSPVRLGPGTATVEQEAIHLDWGGKAPEATLRALFGASFRVKQGFIDLPGTRPPGAPEPPPELAAALHDALKVTFLQHGKSTQGGARRRVTFEVDARPVIVESQGYDSFVHQTAWQSVLEALEVGSTSLASWAYPGAAERHIGVRVTKVEYTAAEALCACFALVGCVSYKLPQLRGGAFVALAPTNLVRFAELRPGLTPKRLRDVAVAGASDAVLAAQLVMAQEAGKKRLGAVLGTTEAVALRQMPWNAQQKIRGAVVRQDAVLEEVLDRYEAAAAALPHTLRVRKPEGKATGEASYFIAISALRAFITENLAASRPWYADFATATTAEGRFIHDYRDRDNLGALLWHERKGLIAMHPYLGEAEQWLVQSVHLALRSRFKSIYADTKESAPATRSNRLKGERERLRLSFAGAKTPEQVRAALADLWSRAGTNRELQEHWRDILQLLGPERWRAARDLALVALASYQGKGGEAAELEDADEAAGASEQS.

Disordered stretches follow at residues 1–23 (MACM…AGLR) and 551–570 (GGEA…SEQS).

This sequence belongs to the CRISPR-associated protein Cas8a1/Csx13 family. Myxan subtype subfamily.

Its function is as follows. CRISPR (clustered regularly interspaced short palindromic repeat) is an adaptive immune system that provides protection against mobile genetic elements (viruses, transposable elements and conjugative plasmids). CRISPR clusters contain spacers, sequences complementary to antecedent mobile elements, and target invading nucleic acids. CRISPR clusters are transcribed and processed into CRISPR RNA (crRNA). Functions in an unknown fashion to stimulate transcription of fruA independently of the intracellular A- and E-developmental signals. In Myxococcus xanthus (strain DK1622), this protein is CRISPR-associated protein Cas8a1/Csx13 (devT).